A 372-amino-acid polypeptide reads, in one-letter code: MHEKDLLLLAESFKRYYFEHFERIPVPDRAAQREFGYQRFGGGMVRHMRVKGSDELRLLLMQNSPSDVYCSNGIYSFPELPMSDKDWKEADLIFDIDAKDLGLPCRKDHTFRRCSSCGRSHSGDGCPRCGPGAHDQISVLCKDCIGGAKKEVEKLMHILEEDLGVGRDSVVVYFSGNEGFHVHIGGTQFQGLGSRERGELADYVRFVGAVPQAFGMGRNGAARRDFDYDDEGGWKGRLHREFFGPKSRSSVAITAAIKEGHRAFGERLKQISPVLGANIDPHVTTDIHRIFRLPGSLNGKSGLAKIPCINLDKFDPGSDACLIDSDEVQVTADMPMRLKLGGRRFGPYNGEAVSVPRFAAAYMVCKGLASAA.

Catalysis depends on residues Asp-95, Asp-97, and Asp-280.

Belongs to the eukaryotic-type primase small subunit family. In terms of assembly, heterodimer of a small subunit (PriS) and a large subunit (PriL). Requires Mg(2+) as cofactor. It depends on Mn(2+) as a cofactor.

Catalytic subunit of DNA primase, an RNA polymerase that catalyzes the synthesis of short RNA molecules used as primers for DNA polymerase during DNA replication. The small subunit contains the primase catalytic core and has DNA synthesis activity on its own. Binding to the large subunit stabilizes and modulates the activity, increasing the rate of DNA synthesis while decreasing the length of the DNA fragments, and conferring RNA synthesis capability. The DNA polymerase activity may enable DNA primase to also catalyze primer extension after primer synthesis. May also play a role in DNA repair. In Cenarchaeum symbiosum (strain A), this protein is DNA primase small subunit PriS.